Reading from the N-terminus, the 269-residue chain is Putative hydro-lyase Aave_3512 (269 aa).

The protein belongs to the D-glutamate cyclase family.

In Paracidovorax citrulli (strain AAC00-1) (Acidovorax citrulli), this protein is Putative hydro-lyase Aave_3512.